Consider the following 157-residue polypeptide: DNA gyrase inhibitor (157 aa).

Belongs to the DNA gyrase inhibitor family. As to quaternary structure, interacts with DNA gyrase.

It localises to the cytoplasm. Inhibits the supercoiling activity of DNA gyrase. Acts by inhibiting DNA gyrase at an early step, prior to (or at the step of) binding of DNA by the gyrase. It protects cells against toxins that target DNA gyrase, by inhibiting activity of these toxins and reducing the formation of lethal double-strand breaks in the cell. This chain is DNA gyrase inhibitor, found in Citrobacter rodentium (strain ICC168) (Citrobacter freundii biotype 4280).